Reading from the N-terminus, the 183-residue chain is ATP synthase subunit b, chloroplastic (183 aa).

A helical membrane pass occupies residues 27-49 (LATNLINLTVVVGVLIFFGKGVL).

The protein belongs to the ATPase B chain family. As to quaternary structure, F-type ATPases have 2 components, F(1) - the catalytic core - and F(0) - the membrane proton channel. F(1) has five subunits: alpha(3), beta(3), gamma(1), delta(1), epsilon(1). F(0) has four main subunits: a(1), b(1), b'(1) and c(10-14). The alpha and beta chains form an alternating ring which encloses part of the gamma chain. F(1) is attached to F(0) by a central stalk formed by the gamma and epsilon chains, while a peripheral stalk is formed by the delta, b and b' chains.

The protein resides in the plastid. It is found in the chloroplast thylakoid membrane. Its function is as follows. F(1)F(0) ATP synthase produces ATP from ADP in the presence of a proton or sodium gradient. F-type ATPases consist of two structural domains, F(1) containing the extramembraneous catalytic core and F(0) containing the membrane proton channel, linked together by a central stalk and a peripheral stalk. During catalysis, ATP synthesis in the catalytic domain of F(1) is coupled via a rotary mechanism of the central stalk subunits to proton translocation. Component of the F(0) channel, it forms part of the peripheral stalk, linking F(1) to F(0). The sequence is that of ATP synthase subunit b, chloroplastic from Brachypodium distachyon (Purple false brome).